Here is a 486-residue protein sequence, read N- to C-terminus: E3 ubiquitin-protein ligase TRIM50 (486 aa).

Residues 16-57 form an RING-type zinc finger; the sequence is CPVCLEVFKEPLMLQCGHSYCKGCLLSLSRHLDSELRCPVCR. The B box-type zinc finger occupies 84 to 125; the sequence is PEPQVCTHHRNPLSLFCEKDQELICGLCGLLGSHQHHRVTPV. Zn(2+)-binding residues include Cys-89, His-92, Cys-111, and His-117. 2 coiled-coil regions span residues 125–170 and 204–235; these read VSTV…ESDV and LVASLDMQLEQARGAQERLAQATCMLEQFGNE. In terms of domain architecture, B30.2/SPRY spans 275–474; that stretch reads DIKLTVWKRL…LPMVLPLPSG (200 aa). Position 372 is an N6-acetyllysine (Lys-372).

It belongs to the TRIM/RBCC family. Can form dimers and trimers. Interacts with several E2 ubiquitin-conjugating enzymes, including UBE2L6, UBE2E1, UBE2E3. No interaction with UBE2H. Interacts with BECN1. Interacts with SQSTM1. Interacts with NLRP3. In terms of processing, auto-ubiquitinated. Acetylated by EP300 and KAT2B. HDAC6 drives TRIM50 deacetylation. Acetylation antagonizes with TRIM50 ubiquitination.

It is found in the cytoplasm. It carries out the reaction S-ubiquitinyl-[E2 ubiquitin-conjugating enzyme]-L-cysteine + [acceptor protein]-L-lysine = [E2 ubiquitin-conjugating enzyme]-L-cysteine + N(6)-ubiquitinyl-[acceptor protein]-L-lysine.. E3 ubiquitin-protein ligase that ubiquitinates Beclin-1/BECN1 in a 'Lys-63'-dependent manner enhancing its binding to ULK1. In turn, promotes starvation-induced autophagy activation. Also interacts with p62/SQSTM1 protein and thereby induces the formation and the autophagy clearance of aggresome-associated polyubiquitinated proteins through HDAC6 interaction. Also promotes NLRP3 inflammasome activation by directly inducing NLRP3 oligomerization independent of its E3 ligase function. This chain is E3 ubiquitin-protein ligase TRIM50 (TRIM50), found in Sus scrofa (Pig).